Reading from the N-terminus, the 1237-residue chain is GTPase activating protein BUD2 (1237 aa).

Residues 79–110 (GSGKSSISQPPPTTSTRRNLLRKSSNLNSSDQ) are compositionally biased toward low complexity. A disordered region spans residues 79-124 (GSGKSSISQPPPTTSTRRNLLRKSSNLNSSDQSHSKSSEDNEHQPP). A compositionally biased stretch (basic and acidic residues) spans 111–121 (SHSKSSEDNEH). In terms of domain architecture, C2 spans 381–503 (NVEHPQLYDF…KQIKTTSTIM (123 aa)). In terms of domain architecture, Ras-GAP spans 637 to 905 (NSQDQAVSNS…PEIYDYFDKL (269 aa)). Disordered regions lie at residues 721-762 (SIHE…ERER) and 969-1007 (NNNG…PDLD). Residues 735–754 (DVSDDDDDDDDNSSDDDADY) show a composition bias toward acidic residues. Residues 986 to 996 (RDMEREQDRSR) show a composition bias toward basic and acidic residues. Residues 1065-1093 (NITLKDIQKQSTKIMNKIQELEIYLENYE) are a coiled coil. The interval 1170–1204 (NGGMGNRNGHDVNGHNNNNNNNNNNTGDGYNETDR) is disordered. Over residues 1183 to 1199 (GHNNNNNNNNNNTGDGY) the composition is skewed to low complexity.

Its subcellular location is the cytoplasm. The protein localises to the cell cortex. It is found in the cell tip. The protein resides in the cell septum. Its function is as follows. GTPase activating protein (GAP) for RSR1 which is involved in the polarization of yeast and hyphal cells. Directs the site of new daughter cell growth in yeast and hyphal cells. Important for hyphae to maintain linear growth and necessary for hyphal responses to directional cues in the environment (tropisms). Required for correct localization of the septin rings and stabilization of the polarisome at hyphal tips. Involved in cell adhesion. In Candida albicans (strain SC5314 / ATCC MYA-2876) (Yeast), this protein is GTPase activating protein BUD2 (BUD2).